Here is a 464-residue protein sequence, read N- to C-terminus: Alpha-2A adrenergic receptor (464 aa).

The Extracellular portion of the chain corresponds to Met-1–Thr-47. Positions Trp-13–Gly-34 are disordered. A compositionally biased stretch (polar residues) spans Gln-19 to Gly-29. Asn-24 and Asn-28 each carry an N-linked (GlcNAc...) asparagine glycan. The helical transmembrane segment at Val-48 to Phe-73 threads the bilayer. Over Thr-74–Leu-84 the chain is Cytoplasmic. The helical transmembrane segment at Phe-85–Met-110 threads the bilayer. Topologically, residues Gly-111–Cys-120 are extracellular. An intrachain disulfide couples Cys-120 to Cys-201. The helical transmembrane segment at Glu-121 to Leu-143 threads the bilayer. The Cytoplasmic portion of the chain corresponds to Asp-144 to Arg-163. The helical transmembrane segment at Ile-164 to Glu-187 threads the bilayer. At Lys-188–Gln-206 the chain is on the extracellular side. The helical transmembrane segment at Lys-207–Arg-231 threads the bilayer. Residues Ile-232–Phe-388 lie on the Cytoplasmic side of the membrane. Positions Thr-240–Gly-378 are disordered. Low complexity predominate over residues Ala-251–Gly-268. Residues Ser-312 to Leu-329 are compositionally biased toward basic and acidic residues. Residue Ser-345 is modified to Phosphoserine. A compositionally biased stretch (gly residues) spans Ala-354–Pro-363. Arg-367 is modified (omega-N-methylarginine). The helical transmembrane segment at Val-389–Val-413 threads the bilayer. At Gly-414–Lys-423 the chain is on the extracellular side. Residues Phe-424–Asn-444 traverse the membrane as a helical segment. The Cytoplasmic portion of the chain corresponds to His-445–Val-464. Cys-456 carries S-palmitoyl cysteine lipidation.

It belongs to the G-protein coupled receptor 1 family. Adrenergic receptor subfamily. ADRA2A sub-subfamily. Component of the ADA2A-containing complex (ATAC), composed of KAT14, KAT2A, TADA2L, TADA3L, ZZ3, MBIP, WDR5, YEATS2, CCDC101 and DR1.

It localises to the cell membrane. Functionally, alpha-2 adrenergic receptors mediate the catecholamine-induced inhibition of adenylate cyclase through the action of G proteins. Component of the ATAC complex, a complex with histone acetyltransferase activity on histones H3 and H4. This is Alpha-2A adrenergic receptor from Cavia porcellus (Guinea pig).